Here is a 272-residue protein sequence, read N- to C-terminus: Phosphatidylglycerol--prolipoprotein diacylglyceryl transferase (272 aa).

A run of 3 helical transmembrane segments spans residues 19 to 39 (ISIRWYGLMYVIGFFATYFLV), 58 to 78 (LNTVLILCVILGGRLGYVVFY), and 94 to 114 (WHGGMSFHGACIALILGGLIF). Residue R141 participates in a 1,2-diacyl-sn-glycero-3-phospho-(1'-sn-glycerol) binding. Transmembrane regions (helical) follow at residues 207 to 227 (GTILSLFLCLYGLFRIIIENF) and 234 to 254 (LGFIVAHITMGQLLSGAMILC).

This sequence belongs to the Lgt family.

It localises to the cell inner membrane. It catalyses the reaction L-cysteinyl-[prolipoprotein] + a 1,2-diacyl-sn-glycero-3-phospho-(1'-sn-glycerol) = an S-1,2-diacyl-sn-glyceryl-L-cysteinyl-[prolipoprotein] + sn-glycerol 1-phosphate + H(+). The protein operates within protein modification; lipoprotein biosynthesis (diacylglyceryl transfer). In terms of biological role, catalyzes the transfer of the diacylglyceryl group from phosphatidylglycerol to the sulfhydryl group of the N-terminal cysteine of a prolipoprotein, the first step in the formation of mature lipoproteins. The protein is Phosphatidylglycerol--prolipoprotein diacylglyceryl transferase of Desulfotalea psychrophila (strain LSv54 / DSM 12343).